We begin with the raw amino-acid sequence, 589 residues long: Sentrin-specific protease 2 (589 aa).

The short motif at 28 to 31 is the Nuclear localization signal element; it reads KRRR. Residue Ser-32 is modified to Phosphoserine. The Nuclear localization signal motif lies at 46-51; that stretch reads PAKRPR. The interval 71–382 is axin-binding; the sequence is GFPFQLTTKP…EKEISNALGH (312 aa). Disordered regions lie at residues 148–179 and 191–210; these read SFGFTLNSEGYNRRPGGRRHSKGNPESSLMWK and EESGKGLRRPHRTVEEGVQK. Residues 317–332 carry the Nuclear export signal motif; that stretch reads LEPDLSEEVSARLRLG. Residues Ser-333 and Ser-344 each carry the phosphoserine modification. The interval 395–559 is protease; the sequence is LRITRGDIQT…MFTCKYADYI (165 aa). Catalysis depends on residues His-478 and Asp-495. Cys-548 functions as the Nucleophile in the catalytic mechanism.

It belongs to the peptidase C48 family. In terms of assembly, binds to SUMO2 and SUMO3. Interacts with the C-terminal domain of NUP153 via its N-terminus. Interacts with MTA1. Polyubiquitinated; which leads to proteasomal degradation.

The protein resides in the nucleus. Its subcellular location is the nuclear pore complex. It is found in the nucleus membrane. It localises to the cytoplasm. Its function is as follows. Protease that catalyzes two essential functions in the SUMO pathway. The first is the hydrolysis of an alpha-linked peptide bond at the C-terminal end of the small ubiquitin-like modifier (SUMO) propeptides, SUMO1, SUMO2 and SUMO3 leading to the mature form of the proteins. The second is the deconjugation of SUMO1, SUMO2 and SUMO3 from targeted proteins, by cleaving an epsilon-linked peptide bond between the C-terminal glycine of the mature SUMO and the lysine epsilon-amino group of the target protein. May down-regulate CTNNB1 levels and thereby modulate the Wnt pathway. Deconjugates SUMO2 from MTA1. Plays a dynamic role in adipogenesis by desumoylating and promoting the stabilization of CEBPB. Acts as a regulator of the cGAS-STING pathway by catalyzing desumoylation of CGAS and STING1 during the late phase of viral infection. In Pongo abelii (Sumatran orangutan), this protein is Sentrin-specific protease 2 (SENP2).